A 263-amino-acid polypeptide reads, in one-letter code: uncharacterized protein (263 aa).

An N-terminal signal peptide occupies residues methionine 1–glycine 22. The N-palmitoyl cysteine moiety is linked to residue cysteine 23. Cysteine 23 carries S-diacylglycerol cysteine lipidation.

The protein belongs to the staphylococcal tandem lipoprotein family.

Its subcellular location is the cell membrane. This is an uncharacterized protein from Staphylococcus aureus (strain MSSA476).